Consider the following 146-residue polypeptide: MEFWKTKRLEELNPEEWESLCDGCGKCCLNKIIDDETDELYYTNAACKLLDRDACHCRHYSERFTFVPGCAAITPDNIASLTWLPDSCAYVRLFQGRDLPSWHPLVTGSKEAMHAAGMSVKGKAVCETKVRYLEDHIVLWPLKDVD.

It belongs to the UPF0260 family.

This chain is UPF0260 protein Sama_1927, found in Shewanella amazonensis (strain ATCC BAA-1098 / SB2B).